Consider the following 218-residue polypeptide: MSETEIKGILGTKLGMTQIFDEDNRVIPVTVVEAGPCVVTQIRTVETDGYNAIQIAYGEIDPRKANKPAAGHFKKAGVTPRRHVAEIRMDDVSGYELGQDVTVEIFEGINFVDVTGTTKGKGYAGAMKRHGFAGQGAAHGNQAAHRRVGGIGACATPGRVFKGTRMAGRMGSDRVTTQNLKVQKIDADANLILIKGAIPGVRGGIVTVKTAVKGGAHA.

It belongs to the universal ribosomal protein uL3 family. In terms of assembly, part of the 50S ribosomal subunit. Forms a cluster with proteins L14 and L19.

One of the primary rRNA binding proteins, it binds directly near the 3'-end of the 23S rRNA, where it nucleates assembly of the 50S subunit. The polypeptide is Large ribosomal subunit protein uL3 (Corynebacterium diphtheriae (strain ATCC 700971 / NCTC 13129 / Biotype gravis)).